A 210-amino-acid chain; its full sequence is Ribosomal RNA small subunit methyltransferase G (210 aa).

S-adenosyl-L-methionine-binding positions include glycine 76, leucine 81, valine 127 to glutamate 128, and arginine 142.

This sequence belongs to the methyltransferase superfamily. RNA methyltransferase RsmG family.

It is found in the cytoplasm. It carries out the reaction guanosine(527) in 16S rRNA + S-adenosyl-L-methionine = N(7)-methylguanosine(527) in 16S rRNA + S-adenosyl-L-homocysteine. Its function is as follows. Specifically methylates the N7 position of guanine in position 527 of 16S rRNA. The polypeptide is Ribosomal RNA small subunit methyltransferase G (Aliivibrio fischeri (strain ATCC 700601 / ES114) (Vibrio fischeri)).